Consider the following 190-residue polypeptide: Cytoplasmic envelopment protein 3 (190 aa).

Residue Gly2 is the site of N-myristoyl glycine; by host attachment. A disordered region spans residues 14–190 (GTTSGEPLKD…TKKPAASLPF (177 aa)). The span at 30 to 43 (SLRSYDNIPPTSSS) shows a compositional bias: polar residues. Residues 44-58 (DEGEDDDDGEDDDNE) show a composition bias toward acidic residues. Over residues 80–90 (SHREATHDGPK) the composition is skewed to basic and acidic residues. Residues 108 to 123 (KQSKKKKKPSKHHHHQ) show a composition bias toward basic residues. A compositionally biased stretch (acidic residues) spans 130 to 139 (ETDDLDEEDT).

The protein belongs to the herpesviridae cytoplasmic envelopment protein 3 family. As to quaternary structure, interacts with cytoplasmic envelopment protein 2; this interaction is essential for the proper localization of each protein to the assembly complex and thus for the production of infectious virus. Myristoylation and palmitoylation (probably on one or more of the nearby cysteines at the N-terminus) enable membrane-binding and Golgi apparatus-specific targeting and are essential for efficient packaging. In terms of processing, phosphorylated. Phosphorylation does not seem to be required for recycling to the host Golgi apparatus. Packaging is selective for underphosphorylated forms.

The protein localises to the virion tegument. It localises to the virion membrane. The protein resides in the host cell membrane. Its subcellular location is the host Golgi apparatus membrane. Its function is as follows. Plays an important role in the cytoplasmic envelopment of tegument proteins and capsids during the assembly and egress processes. Also participates in viral entry at the fusion step probably by regulating the core fusion machinery. This chain is Cytoplasmic envelopment protein 3 (UL99), found in Human cytomegalovirus (strain Merlin) (HHV-5).